A 151-amino-acid chain; its full sequence is Small ribosomal subunit protein uS15 (151 aa).

Belongs to the universal ribosomal protein uS15 family.

The protein is Small ribosomal subunit protein uS15 (RpS13) of Anopheles gambiae (African malaria mosquito).